Consider the following 1430-residue polypeptide: FYVE, RhoGEF and PH domain-containing protein 6 (1430 aa).

The tract at residues 1 to 36 (MTSAAEIKKPPVAPKPKFVVANNKPAPPPIAPKPDI) is disordered. Low complexity predominate over residues 15–24 (KPKFVVANNK). S231 carries the post-translational modification Phosphoserine. The tract at residues 330–351 (CVDTPSESTEEPGNSDSSSSCL) is disordered. Residues 334-351 (PSESTEEPGNSDSSSSCL) are compositionally biased toward polar residues. A Phosphoserine modification is found at S515. The segment at 516–538 (EELLEKSSYPSSEEKSSEKSLER) is disordered. The span at 527–538 (SEEKSSEKSLER) shows a compositional bias: basic and acidic residues. Phosphoserine is present on residues S554, S605, S692, and S721. 2 disordered regions span residues 695 to 739 (NYSL…PYKS) and 800 to 869 (PDGQ…NGMK). Residues 728–739 (SRESSSQAPYKS) are compositionally biased toward polar residues. The segment covering 831–847 (PSDEEEIINSSDEDDVS) has biased composition (acidic residues). A compositionally biased stretch (basic and acidic residues) spans 851–868 (SKGEPDPLEDKQDEDNGM). The DH domain maps to 871 to 1060 (KVHHIAKEIM…IEVANHANDT (190 aa)). Residues 1089-1183 (VFLKEGILMK…WLEAISRAIE (95 aa)) form the PH 1 domain. The residue at position 1197 (S1197) is a Phosphoserine. Residues 1222–1281 (DTRATMCMICTSEFTLTWRRHHCRACGKIVCQACSSNKYGLDYLKNQPARVCEHCFQELQ) form an FYVE-type zinc finger. 8 residues coordinate Zn(2+): C1228, C1231, C1244, C1247, C1252, C1255, C1273, and C1276. Residues 1333-1429 (DSSMSGYLYR…WIEAFQEGTI (97 aa)) form the PH 2 domain.

The protein resides in the cytoplasm. Its subcellular location is the cytoskeleton. May activate CDC42, a member of the Ras-like family of Rho- and Rac proteins, by exchanging bound GDP for free GTP. May play a role in regulating the actin cytoskeleton and cell shape. The protein is FYVE, RhoGEF and PH domain-containing protein 6 (FGD6) of Homo sapiens (Human).